The sequence spans 245 residues: tRNA pseudouridine synthase A (245 aa).

Asp52 functions as the Nucleophile in the catalytic mechanism. Substrate is bound at residue Tyr111.

It belongs to the tRNA pseudouridine synthase TruA family. In terms of assembly, homodimer.

It catalyses the reaction uridine(38/39/40) in tRNA = pseudouridine(38/39/40) in tRNA. Functionally, formation of pseudouridine at positions 38, 39 and 40 in the anticodon stem and loop of transfer RNAs. This chain is tRNA pseudouridine synthase A, found in Xanthobacter autotrophicus (strain ATCC BAA-1158 / Py2).